The following is a 576-amino-acid chain: 4-alpha-glucanotransferase, chloroplastic/amyloplastic (576 aa).

The transit peptide at 1–52 directs the protein to the chloroplast; the sequence is MAIHTCFSLIPSSFSSPKLPYPKNTTFQSPIPKLSRPTFMFDRKGSFQNGTA.

Belongs to the disproportionating enzyme family. As to expression, present in leaves, stems, roots, and stolons but is most abundant in developing and mature tubers.

The protein localises to the plastid. The protein resides in the chloroplast. It is found in the amyloplast. The enzyme catalyses Transfers a segment of a (1-&gt;4)-alpha-D-glucan to a new position in an acceptor, which may be glucose or a (1-&gt;4)-alpha-D-glucan.. In terms of biological role, may act during starch breakdown to convert small oligosaccharides into larger molecules upon which starch phosphorylase can act, or may change the structure of starch molecules and grain architecture by modifying chain length, or may generate from starch and glucose oligosaccharides which can serve either as primers for new starch phosphoenzyme. The protein is 4-alpha-glucanotransferase, chloroplastic/amyloplastic (DPEP) of Solanum tuberosum (Potato).